Consider the following 632-residue polypeptide: Cleavage stimulation factor subunit 2 tau variant (632 aa).

Positions Arg16–Ser94 constitute an RRM domain. 2 disordered regions span residues Ile201 to Ala296 and Tyr365 to Met433. Pro residues predominate over residues Pro213–Cys233. Positions Pro234–Asn244 are enriched in low complexity. Positions Ala275–Gly287 are enriched in pro residues. The span at Tyr365–Met375 shows a compositional bias: low complexity. Basic and acidic residues-rich tracts occupy residues His377–Arg390 and Arg420–Met433. Residues Met428 to Pro432 form a 1-1; approximate repeat. The segment at Met428–Gly466 is 8 X 5 AA tandem repeats of M-E-T-R-[AG]. A 1-2; approximate repeat occupies Met433 to Val437. Residues Leu438–Gly442 form a 1-3; approximate repeat. The stretch at Met443–Arg446 is one 1-4; approximate repeat. A 1-5; approximate repeat occupies Met447–Ala451. One copy of the 1-6 repeat lies at Met452–Gly456. One copy of the 1-7; approximate repeat lies at Met457 to Gly461. The stretch at Leu462–Gly466 is one 1-8; approximate repeat. One copy of the 2-1; approximate repeat lies at Gly508–Gln512. The 12 X 5 AA tandem repeats of G-[AT]-G-[MI]-Q stretch occupies residues Gly508–Gln565. The 2-2 repeat unit spans residues Gly513–Gln517. One copy of the 2-3; approximate repeat lies at Gly518–Gln522. Residues Gly519–Gly543 are compositionally biased toward gly residues. Residues Gly519 to Gln590 form a disordered region. A 2-4 repeat occupies Gly523 to Gln527. One copy of the 2-5; approximate repeat lies at Gly528–Gln532. The 2-6 repeat unit spans residues Gly533–Gln537. Residues Gly538–Gln542 form a 2-7; approximate repeat. Residues Gly543–Gln547 form a 2-8 repeat. The segment covering Ala544–Gly557 has biased composition (low complexity). A 2-9; approximate repeat occupies Ala548 to Gln551. A 2-10; approximate repeat occupies Gly552–Gln556. Residues Gly557–Gln560 form a 2-11; approximate repeat. The span at Gly558–Gln574 shows a compositional bias: gly residues. Residues Gly561–Gln565 form a 2-12 repeat. The segment covering Pro575 to Gln584 has biased composition (low complexity). Ser579 is modified (phosphoserine).

As to expression, expressed in testes, where it is restricted to pachytene spermatocytes and spermatids, and in the brain (at protein level).

Its subcellular location is the nucleus. Functionally, may play a significant role in AAUAAA-independent mRNA polyadenylation in germ cells. Directly involved in the binding to pre-mRNAs. This chain is Cleavage stimulation factor subunit 2 tau variant (Cstf2t), found in Mus musculus (Mouse).